A 738-amino-acid chain; its full sequence is Vesicle-fusing ATPase (738 aa).

Residues 507 to 512 (NGIINY) and 547 to 554 (PGCGKSSL) contribute to the ATP site.

It belongs to the AAA ATPase family. As to quaternary structure, interacts with syn7A, snpA and snpC. It depends on Mg(2+) as a cofactor.

It is found in the cytoplasmic vesicle membrane. It localises to the endosome membrane. It carries out the reaction ATP + H2O = ADP + phosphate + H(+). Required for vesicle-mediated transport. Involved in endocytosis and endosome-endosome fusion. May be required for transport from the endoplasmic reticulum to the Golgi stack, and for the fusion of transport vesicles within the Golgi cisternae. Required for cell polarity, locomotion and chemotaxis. The polypeptide is Vesicle-fusing ATPase (nsfA) (Dictyostelium discoideum (Social amoeba)).